We begin with the raw amino-acid sequence, 95 residues long: CRISPR-associated endoribonuclease Cas2 3 (95 aa).

Aspartate 7 provides a ligand contact to Mg(2+).

It belongs to the CRISPR-associated endoribonuclease Cas2 protein family. As to quaternary structure, homodimer, forms a heterotetramer with a Cas1 homodimer. Mg(2+) is required as a cofactor.

CRISPR (clustered regularly interspaced short palindromic repeat), is an adaptive immune system that provides protection against mobile genetic elements (viruses, transposable elements and conjugative plasmids). CRISPR clusters contain sequences complementary to antecedent mobile elements and target invading nucleic acids. CRISPR clusters are transcribed and processed into CRISPR RNA (crRNA). Functions as a ssRNA-specific endoribonuclease. Involved in the integration of spacer DNA into the CRISPR cassette. This Rhodospirillum rubrum (strain ATCC 11170 / ATH 1.1.1 / DSM 467 / LMG 4362 / NCIMB 8255 / S1) protein is CRISPR-associated endoribonuclease Cas2 3.